The sequence spans 34 residues: Photosystem II reaction center protein Psb30 (34 aa).

A helical transmembrane segment spans residues 6–26 (VVFQLMALFFVLAAGPAVVVL).

This sequence belongs to the Psb30/Ycf12 family. PSII is composed of 1 copy each of membrane proteins PsbA, PsbB, PsbC, PsbD, PsbE, PsbF, PsbH, PsbI, PsbJ, PsbK, PsbL, PsbM, PsbT, PsbX, PsbY, PsbZ, Psb30/Ycf12, peripheral proteins of the oxygen-evolving complex and a large number of cofactors. It forms dimeric complexes.

The protein localises to the plastid. It localises to the chloroplast thylakoid membrane. Its function is as follows. A core subunit of photosystem II (PSII), probably helps stabilize the reaction center. The chain is Photosystem II reaction center protein Psb30 from Stigeoclonium helveticum (Green alga).